The primary structure comprises 316 residues: Secondary metabolism regulator laeA (316 aa).

The protein belongs to the methyltransferase superfamily. LaeA methyltransferase family. Component of the heterotrimeric velvet complex composed of laeA, ve1 and velB; Ve1 acting as a bridging protein between laeA and velB. Interacts directly with veA.

It localises to the nucleus. The protein resides in the cytoplasm. The catalysed reaction is L-methionyl-[protein] + S-adenosyl-L-methionine = S-methyl-L-methionyl-[protein] + S-adenosyl-L-homocysteine. Its function is as follows. Methyltransferase that performs automethylation. No other methyl-accepting substrate has been identified yet. Component of the velvet transcription factor complex that acts as a global regulator for secondary metabolite gene expression. Controls the expression of the mycotoxins trichothecenes and zearalenon gene clusters. Negatively controls perithecial induction, but positively controls virulence toward the host plant. This chain is Secondary metabolism regulator laeA, found in Gibberella zeae (strain ATCC MYA-4620 / CBS 123657 / FGSC 9075 / NRRL 31084 / PH-1) (Wheat head blight fungus).